The primary structure comprises 203 residues: Translation initiation factor IF-3 (203 aa).

The segment at Q168–E203 is disordered. Over residues K193–E203 the composition is skewed to basic and acidic residues.

Belongs to the IF-3 family. In terms of assembly, monomer.

The protein resides in the cytoplasm. In terms of biological role, IF-3 binds to the 30S ribosomal subunit and shifts the equilibrium between 70S ribosomes and their 50S and 30S subunits in favor of the free subunits, thus enhancing the availability of 30S subunits on which protein synthesis initiation begins. The polypeptide is Translation initiation factor IF-3 (Bacteroides fragilis (strain ATCC 25285 / DSM 2151 / CCUG 4856 / JCM 11019 / LMG 10263 / NCTC 9343 / Onslow / VPI 2553 / EN-2)).